A 500-amino-acid chain; its full sequence is Cobyric acid synthase (500 aa).

Residues 255-444 (AIDIAVIRCP…MHDLFHNDAF (190 aa)) form the GATase cobBQ-type domain. Cysteine 337 serves as the catalytic Nucleophile. The active site involves histidine 436.

It belongs to the CobB/CobQ family. CobQ subfamily.

It functions in the pathway cofactor biosynthesis; adenosylcobalamin biosynthesis. In terms of biological role, catalyzes amidations at positions B, D, E, and G on adenosylcobyrinic A,C-diamide. NH(2) groups are provided by glutamine, and one molecule of ATP is hydrogenolyzed for each amidation. This chain is Cobyric acid synthase, found in Geobacillus thermodenitrificans (strain NG80-2).